We begin with the raw amino-acid sequence, 61 residues long: Small ribosomal subunit protein uS14 (61 aa).

C24, C27, C40, and C43 together coordinate Zn(2+).

It belongs to the universal ribosomal protein uS14 family. Zinc-binding uS14 subfamily. In terms of assembly, part of the 30S ribosomal subunit. Contacts proteins S3 and S10. Zn(2+) is required as a cofactor.

Binds 16S rRNA, required for the assembly of 30S particles and may also be responsible for determining the conformation of the 16S rRNA at the A site. The protein is Small ribosomal subunit protein uS14 of Brevibacillus brevis (strain 47 / JCM 6285 / NBRC 100599).